Here is a 378-residue protein sequence, read N- to C-terminus: MTAPASAPRLAQARRIVIKIGSALLVDSANASLRLEWLQSVCADIADLRSRGAEVIVVSSGAISLARHRLGLTSRRLRLDEKQAMASVGQIGLAQGWSAALAGHDLVAAQLLLTPDDTENRERHLNARATLQTLLDLGCVPVINENDAIATGEIRFGDNDRLGARVAQMTGADCLVLLSDIDGLYTADPRQDPSARHIPVVEQMTDEIMAMGGEPPPGYSSGGMRTKLLAARIATRAGANMVIAAGQEHHPLRRLQNGGLCTWFMAQTDAGSARKRWIGGSLQPKGTLTIDAGARRALEESASLLPAGVTGLEGSFGRGDLVLIRDADGSIIGRGLIAYDSEESQKLIGHRSGEMEQLLGYRGRDALIHRDDLALDLP.

K19 is a binding site for ATP. Substrate is bound by residues S60, D147, and N159. ATP contacts are provided by residues 179–180 (SD) and 221–227 (SGGMRTK). In terms of domain architecture, PUA spans 285 to 362 (KGTLTIDAGA…GEMEQLLGYR (78 aa)).

The protein belongs to the glutamate 5-kinase family.

The protein resides in the cytoplasm. The catalysed reaction is L-glutamate + ATP = L-glutamyl 5-phosphate + ADP. It functions in the pathway amino-acid biosynthesis; L-proline biosynthesis; L-glutamate 5-semialdehyde from L-glutamate: step 1/2. Catalyzes the transfer of a phosphate group to glutamate to form L-glutamate 5-phosphate. The polypeptide is Glutamate 5-kinase (Gluconobacter oxydans (strain 621H) (Gluconobacter suboxydans)).